Reading from the N-terminus, the 1305-residue chain is ABC transporter FPSE_09185 (1305 aa).

An N-linked (GlcNAc...) asparagine glycan is attached at Asn-28. 6 consecutive transmembrane segments (helical) span residues 44–64 (FCVY…MPLM), 99–119 (LYIV…KFCF), 172–192 (RLGT…VAFT), 199–219 (IVSA…VPIY), 277–297 (IIGA…GLAF), and 312–332 (VGVV…FSYL). One can recognise an ABC transmembrane type-1 1 domain in the interval 48 to 348 (VVGALASIGV…ISQAMVAATE (301 aa)). The 292-residue stretch at 372 to 663 (LIFKDVTFEY…ENGVYYSLVE (292 aa)) folds into the ABC transporter 1 domain. Residue 407-414 (GPSGSGKS) coordinates ATP. Residues 434–454 (EAATPRSSKEGERDNHDERKY) are disordered. Residues 440 to 454 (SSKEGERDNHDERKY) show a composition bias toward basic and acidic residues. Residues Asn-468, Asn-507, and Asn-525 are each glycosylated (N-linked (GlcNAc...) asparagine). 6 helical membrane passes run 737–757 (FLLI…QAWL), 780–800 (GFMW…QCWI), 851–873 (GVFG…CLII), 877–899 (FGWK…SGFW), 964–984 (AVIF…ILWY), and 999–1019 (FMVS…ILGV). Residues 738–1025 (LLITIASMGV…ILGVAPSAAQ (288 aa)) form the ABC transmembrane type-1 2 domain. Residues 1038–1057 (DSNRSSQEAEKSGPTVEDTD) form a disordered region. Asn-1040, Asn-1066, and Asn-1075 each carry an N-linked (GlcNAc...) asparagine glycan. In terms of domain architecture, ABC transporter 2 spans 1062 to 1300 (IELCNVSFKY…RGIYWDMCQT (239 aa)). 1096–1103 (GPSGCGKT) contacts ATP. N-linked (GlcNAc...) asparagine glycosylation occurs at Asn-1125.

Belongs to the ABC transporter superfamily. ABCB family. Multidrug resistance exporter (TC 3.A.1.201) subfamily.

The protein localises to the membrane. Functionally, ABC transporter; part of the gene cluster that mediates the biosynthesis of the lipopeptides W493 A and B. W493 A and B consist of six amino acid residues D-allo-thr, L-Ala, D-Ala, L-Gln, D-Tyr, and L-Val/L-Ile linked to a 3-hydroxy-4-methyltetradecanoic acid polyketide chain. May be involved in excretion or internal transport of W493 A and B. The sequence is that of ABC transporter FPSE_09185 from Fusarium pseudograminearum (strain CS3096) (Wheat and barley crown-rot fungus).